A 356-amino-acid chain; its full sequence is UDP-N-acetylglucosamine--N-acetylmuramyl-(pentapeptide) pyrophosphoryl-undecaprenol N-acetylglucosamine transferase (356 aa).

Residues 11-13 (TGG), asparagine 122, serine 186, and glutamine 287 each bind UDP-N-acetyl-alpha-D-glucosamine.

It belongs to the glycosyltransferase 28 family. MurG subfamily.

Its subcellular location is the cell inner membrane. It carries out the reaction di-trans,octa-cis-undecaprenyl diphospho-N-acetyl-alpha-D-muramoyl-L-alanyl-D-glutamyl-meso-2,6-diaminopimeloyl-D-alanyl-D-alanine + UDP-N-acetyl-alpha-D-glucosamine = di-trans,octa-cis-undecaprenyl diphospho-[N-acetyl-alpha-D-glucosaminyl-(1-&gt;4)]-N-acetyl-alpha-D-muramoyl-L-alanyl-D-glutamyl-meso-2,6-diaminopimeloyl-D-alanyl-D-alanine + UDP + H(+). It functions in the pathway cell wall biogenesis; peptidoglycan biosynthesis. In terms of biological role, cell wall formation. Catalyzes the transfer of a GlcNAc subunit on undecaprenyl-pyrophosphoryl-MurNAc-pentapeptide (lipid intermediate I) to form undecaprenyl-pyrophosphoryl-MurNAc-(pentapeptide)GlcNAc (lipid intermediate II). In Anaplasma marginale (strain St. Maries), this protein is UDP-N-acetylglucosamine--N-acetylmuramyl-(pentapeptide) pyrophosphoryl-undecaprenol N-acetylglucosamine transferase.